The sequence spans 230 residues: UPF0500 protein C1orf216 homolog (230 aa).

The segment at 1 to 103 (MFAAIQPGLA…AEPEKLSGAS (103 aa)) is disordered. Residues 60 to 73 (RSSSESPSDNQVFQ) are compositionally biased toward polar residues. Over residues 85 to 94 (PPEGAEIPGA) the composition is skewed to low complexity.

This sequence belongs to the UPF0500 family.

This chain is UPF0500 protein C1orf216 homolog, found in Mus musculus (Mouse).